Consider the following 521-residue polypeptide: GGGGQSFLAADNAVLVSTQCYKRHSYVEIPSNLLVQNGMSLKDGANLYVYKRVNGAFVTLPNTLNTQGRSYETFEPRSDVERDFLDMSEEDFVEKYGKDLGLQHILYGEVDKPQLGGLHTVIGMYRLLRANKLNAKSVTNSDSDVMQNYFVLADNGSYKQVCTVVDLLLDDFLELLRNILNEYGTNKSKVVTVSIDYHSINFMTWFEDGSIKTCYPQLQSAWTCGYNMPELYKVQNCVMEPCNIPNYGVGITLPSGIMMNVAKYTQLCQYLSKTTVCVPHNMRVMHFGAGSDKGVAPGSTVLKQWLPEGTLLVDTDIVDYVSDAHVSVLSDCNKYKTEHKFDLVISDMYTDNDSKRKHGGVIANNGNDDVFIYLSSFLRNNLALGGSFAVKLTETSWHESLYDIAQDCAWWTMFCTAVNASSSEAFLIGVNYLGASVKVKVSGKTLHANYIFWRNCNYLQTSAYSIFDVAKFDLRLKATPVVNLKTEQKTDLVFNLIKCGKLLVRDVGNTSFTSDSFVCTM.

An AV-Nsp11N/CoV-Nsp15M domain is found at 1–58; it reads GGGGQSFLAADNAVLVSTQCYKRHSYVEIPSNLLVQNGMSLKDGANLYVYKRVNGAFV. One can recognise a NendoU domain in the interval 75–216; it reads EPRSDVERDF…EDGSIKTCYP (142 aa). Active-site residues include histidine 104, histidine 119, lysine 159, lysine 263, aspartate 347, lysine 391, and glutamate 424. Positions 219-518 constitute a Nidovirus-type SAM-dependent 2'-O-MTase domain; sequence QSAWTCGYNM…NTSFTSDSFV (300 aa).

Its function is as follows. The replicase polyprotein of coronaviruses is a multifunctional protein: it contains the activities necessary for the transcription of negative stranded RNA, leader RNA, subgenomic mRNAs and progeny virion RNA as well as proteinases responsible for the cleavage of the polyprotein into functional products. NendoU is a Mn(2+)-dependent, uridylate-specific enzyme, which leaves 2'-3'-cyclic phosphates 5' to the cleaved bond. This is Replicase polyprotein 1ab (rep) from Gallus gallus (Chicken).